We begin with the raw amino-acid sequence, 343 residues long: N-acetylornithine carbamoyltransferase (343 aa).

Carbamoyl phosphate-binding positions include 49-52, W77, and R112; that span reads SMRT. Residue E144 participates in N(2)-acetyl-L-ornithine binding. Carbamoyl phosphate is bound at residue 148-151; that stretch reads HPCQ. 2 residues coordinate N(2)-acetyl-L-ornithine: K252 and L295. 294–295 is a binding site for carbamoyl phosphate; it reads CL. K302 carries the N6-carboxylysine modification. R322 is a carbamoyl phosphate binding site.

The protein belongs to the aspartate/ornithine carbamoyltransferase superfamily. AOTCase family. Homotrimer.

The protein resides in the cytoplasm. It catalyses the reaction N(2)-acetyl-L-ornithine + carbamoyl phosphate = N(2)-acetyl-L-citrulline + phosphate + H(+). It functions in the pathway amino-acid biosynthesis; L-arginine biosynthesis. Carboxylation at Lys-302 increases the catalytic activity of the enzyme. Its function is as follows. Catalyzes the transfer of the carbamoyl group from carbamoyl phosphate to the delta-amino group of N(2)-acetyl-L-ornithine to produce N(2)-acetyl-L-citrulline. This is a step in an alternative arginine biosynthesis pathway. The enzyme has no activity with ornithine. This chain is N-acetylornithine carbamoyltransferase, found in Xanthomonas axonopodis pv. citri (strain 306).